Reading from the N-terminus, the 224-residue chain is Large ribosomal subunit protein uL3 (224 aa).

N5-methylglutamine is present on Gln158.

The protein belongs to the universal ribosomal protein uL3 family. In terms of assembly, part of the 50S ribosomal subunit. Forms a cluster with proteins L14 and L19. In terms of processing, methylated by PrmB.

Its function is as follows. One of the primary rRNA binding proteins, it binds directly near the 3'-end of the 23S rRNA, where it nucleates assembly of the 50S subunit. In Acidovorax sp. (strain JS42), this protein is Large ribosomal subunit protein uL3.